The primary structure comprises 638 residues: Nitrous-oxide reductase (638 aa).

A signal peptide (tat-type signal) is located at residues 1–52 (MSDKDSKNTPQVPEKLGLSRRGFLGASAVTGAAVAATALGGAVMTRESWAQA). Cu cation is bound by residues His129, His130, and His178. Tyr256, Glu259, Met267, Asp273, and Asn324 together coordinate Ca(2+). Cu cation-binding residues include His326, His382, and His433. 2 residues coordinate Ca(2+): Lys454 and Glu469. Positions 494, 583, 618, 620, 622, 626, and 629 each coordinate Cu cation. A COX2-like region spans residues 542–638 (NKVRVYMTSM…MVGRMMVEPA (97 aa)).

It belongs to the NosZ family. The protein in the C-terminal section; belongs to the cytochrome c oxidase subunit 2 family. In terms of assembly, homodimer. Ca(2+) serves as cofactor. Requires Cu cation as cofactor. In terms of processing, predicted to be exported by the Tat system. The position of the signal peptide cleavage has not been experimentally proven. The N-terminus is blocked.

The protein resides in the periplasm. It catalyses the reaction N2 + 2 Fe(III)-[cytochrome c] + H2O = nitrous oxide + 2 Fe(II)-[cytochrome c] + 2 H(+). The protein operates within nitrogen metabolism; nitrate reduction (denitrification); dinitrogen from nitrate: step 4/4. Functionally, nitrous-oxide reductase is part of a bacterial respiratory system which is activated under anaerobic conditions in the presence of nitrate or nitrous oxide. The polypeptide is Nitrous-oxide reductase (nosZ) (Stutzerimonas stutzeri (Pseudomonas stutzeri)).